We begin with the raw amino-acid sequence, 213 residues long: Endonuclease III (213 aa).

The HhH domain occupies 108-127 (FKELIKLPGVGRKTANVVLN). Residues cysteine 187, cysteine 194, cysteine 197, and cysteine 203 each coordinate [4Fe-4S] cluster.

Belongs to the Nth/MutY family. It depends on [4Fe-4S] cluster as a cofactor.

The enzyme catalyses 2'-deoxyribonucleotide-(2'-deoxyribose 5'-phosphate)-2'-deoxyribonucleotide-DNA = a 3'-end 2'-deoxyribonucleotide-(2,3-dehydro-2,3-deoxyribose 5'-phosphate)-DNA + a 5'-end 5'-phospho-2'-deoxyribonucleoside-DNA + H(+). Its function is as follows. DNA repair enzyme that has both DNA N-glycosylase activity and AP-lyase activity. The DNA N-glycosylase activity releases various damaged pyrimidines from DNA by cleaving the N-glycosidic bond, leaving an AP (apurinic/apyrimidinic) site. The AP-lyase activity cleaves the phosphodiester bond 3' to the AP site by a beta-elimination, leaving a 3'-terminal unsaturated sugar and a product with a terminal 5'-phosphate. In Rickettsia felis (strain ATCC VR-1525 / URRWXCal2) (Rickettsia azadi), this protein is Endonuclease III.